The following is a 153-amino-acid chain: Pheromone-binding protein Gp-9 (153 aa).

A signal peptide spans 1–19 (MKTFVLHIFIFALVAFASA). Intrachain disulfides connect C37/C77, C73/C129, and C118/C138.

Belongs to the PBP/GOBP family. Homodimer.

Its subcellular location is the secreted. Colony queen number, a major feature of social organization, is associated with worker genotype for Gp-9. Colonies are headed by either a single reproductive queen (monogyne form) or multiple queens (polygyne form). Differences in worker Gp-9 genotypes between social forms may cause differences in workers' abilities to recognize queens and regulate their numbers. In Solenopsis substituta (Fire ant), this protein is Pheromone-binding protein Gp-9.